A 189-amino-acid polypeptide reads, in one-letter code: Probable nicotinate-nucleotide adenylyltransferase (189 aa).

This sequence belongs to the NadD family.

The enzyme catalyses nicotinate beta-D-ribonucleotide + ATP + H(+) = deamido-NAD(+) + diphosphate. It participates in cofactor biosynthesis; NAD(+) biosynthesis; deamido-NAD(+) from nicotinate D-ribonucleotide: step 1/1. Catalyzes the reversible adenylation of nicotinate mononucleotide (NaMN) to nicotinic acid adenine dinucleotide (NaAD). The chain is Probable nicotinate-nucleotide adenylyltransferase from Cereibacter sphaeroides (strain ATCC 17023 / DSM 158 / JCM 6121 / CCUG 31486 / LMG 2827 / NBRC 12203 / NCIMB 8253 / ATH 2.4.1.) (Rhodobacter sphaeroides).